A 455-amino-acid polypeptide reads, in one-letter code: Gametocyte surface protein P45/48 (455 aa).

Positions 1 to 30 (MLYFFGNSRFFLFFFYFFFYFVLVIKSSVG) are cleaved as a signal peptide. The 6-Cys 1 domain occupies 48 to 186 (LGYKCDFSTE…ALVHVTVLKY (139 aa)). 2 disulfide bridges follow: Cys52-Cys74 and Cys106-Cys160. 4 N-linked (GlcNAc...) asparagine glycosylation sites follow: Asn135, Asn194, Asn275, and Asn307. The 6-Cys 2 domain maps to 302-433 (VIYGCNFSKD…ITGFMNIKIG (132 aa)). 3 disulfides stabilise this stretch: Cys306–Cys334, Cys351–Cys419, and Cys359–Cys417. Gly433 is lipidated: GPI-anchor amidated glycine. Residues 434 to 455 (SAYYAFLSKLFIIFIPLFFMWL) constitute a propeptide, removed in mature form.

Heterodimer; heterodimerizes with PF230.

Its subcellular location is the cell surface. The protein localises to the cell membrane. Functionally, gametocyte surface protein required for male fertility. This is Gametocyte surface protein P45/48 (PB45/48) from Plasmodium berghei (strain Anka).